Consider the following 179-residue polypeptide: MSEKDFVQVAKLGKTVGLKGYVKLHNLSDFSSQFKKDATFFIKNTKEMLKIKHYNANNSTVLFENYEDIEKAKELTNLILFQSIEKSRQTCKLKKDEFFYFDILECEVFEEDKRLGKVVDILETGASYLFEIQSDEKWVEKKYPKIFFIPYLDKFVKNIDIEKRQIFCTQDAFLILENS.

The PRC barrel domain maps to 95 to 174 (KDEFFYFDIL…QIFCTQDAFL (80 aa)).

This sequence belongs to the RimM family. As to quaternary structure, binds ribosomal protein uS19.

It is found in the cytoplasm. An accessory protein needed during the final step in the assembly of 30S ribosomal subunit, possibly for assembly of the head region. Essential for efficient processing of 16S rRNA. May be needed both before and after RbfA during the maturation of 16S rRNA. It has affinity for free ribosomal 30S subunits but not for 70S ribosomes. The chain is Ribosome maturation factor RimM from Campylobacter jejuni subsp. jejuni serotype O:2 (strain ATCC 700819 / NCTC 11168).